The primary structure comprises 123 residues: Thioredoxin domain-containing protein 17 (123 aa).

The Thioredoxin domain occupies 41 to 123 (SWCPDCVKAE…DLVRMMFTED (83 aa)). Catalysis depends on nucleophile residues Cys-43 and Cys-46. Cysteines 43 and 46 form a disulfide.

This sequence belongs to the thioredoxin family.

Its subcellular location is the cytoplasm. Functionally, disulfide reductase. May participate in various redox reactions through the reversible oxidation of its active center dithiol to a disulfide and catalyze dithiol-disulfide exchange reactions. Has peroxidase activity and may contribute to the elimination of cellular hydrogen peroxide. This Danio rerio (Zebrafish) protein is Thioredoxin domain-containing protein 17 (txndc17).